Consider the following 395-residue polypeptide: MNLSLRRSTSALLASSLLLTIGRGATLPFMTIYLSRQYSLSVDLIGYAMTIALTIGVVFSLGFGILADKFDKKRYMLLAITAFASGFIAITLVNNVTLVVLFFALINCAYSVFATVLKAWFADNLSSTSKTKIFSINYTMLNIGWTIGPPLGTLLVMQSINLPFWLAAICSAFPMLFIQIWVKRSEKIIATETGSVWSPKVLLQDKALLWFTCSGFLASFVSGAFASCISQYVMVIADGDFAEKVVAVVLPVNAAMVVTLQYSVGRRLNPANIRALMTAGTLCFVIGLVGFIFSGNSLLLWGMSAAVFTVGEIIYAPGEYMLIDHIAPPEMKASYFSAQSLGWLGAAINPLVSGVVLTSLPPSSLFVILALVIIAAWVLMLKGIRARPWGQPALC.

12 helical membrane passes run 12 to 34 (LLASSLLLTIGRGATLPFMTIYL), 44 to 66 (LIGYAMTIALTIGVVFSLGFGIL), 75 to 94 (YMLLAITAFASGFIAITLVN), 99 to 121 (VVLFFALINCAYSVFATVLKAWF), 134 to 156 (FSINYTMLNIGWTIGPPLGTLLV), 160 to 182 (INLPFWLAAICSAFPMLFIQIWV), 208 to 230 (LLWFTCSGFLASFVSGAFASCIS), 245 to 264 (VVAVVLPVNAAMVVTLQYSV), 271 to 293 (ANIRALMTAGTLCFVIGLVGFIF), 298 to 320 (LLLWGMSAAVFTVGEIIYAPGEY), 341 to 360 (LGWLGAAINPLVSGVVLTSL), and 364 to 381 (SLFVILALVIIAAWVLML).

The protein belongs to the major facilitator superfamily.

It is found in the cell inner membrane. A transporter able to export peptides. When overexpressed, allows cells deleted for multiple peptidases (pepA, pepB, pepD and pepN) to grow in the presence of dipeptides Ala-Gln or Gly-Tyr which otherwise inhibit growth. Cells overexpressing this protein have decreased intracellular levels of Ala-Gln dipeptide, and in a system that produces the Ala-Gln dipeptide overproduction of this protein increases export of the dipeptide. This is an uncharacterized protein from Escherichia coli (strain K12).